The following is a 336-amino-acid chain: Holliday junction branch migration complex subunit RuvB (336 aa).

Over residues 1 to 11 (MDDDKLLSGDK) the composition is skewed to basic and acidic residues. The segment at 1–21 (MDDDKLLSGDKADDEEASLEK) is disordered. The segment at 1 to 184 (MDDDKLLSGD…FGIVEHMAYY (184 aa)) is large ATPase domain (RuvB-L). Residues Leu-23, Arg-24, Gly-65, Lys-68, Thr-69, Thr-70, 131-133 (EDF), Arg-174, Tyr-184, and Arg-221 each bind ATP. A Mg(2+)-binding site is contributed by Thr-69. Residues 185 to 255 (EVADLEDIVK…IVARSLTYLR (71 aa)) form a small ATPAse domain (RuvB-S) region. The segment at 258–336 (DAGLDETDNK…HLGFPYPENK (79 aa)) is head domain (RuvB-H). Residues Arg-313 and Arg-318 each coordinate DNA.

This sequence belongs to the RuvB family. Homohexamer. Forms an RuvA(8)-RuvB(12)-Holliday junction (HJ) complex. HJ DNA is sandwiched between 2 RuvA tetramers; dsDNA enters through RuvA and exits via RuvB. An RuvB hexamer assembles on each DNA strand where it exits the tetramer. Each RuvB hexamer is contacted by two RuvA subunits (via domain III) on 2 adjacent RuvB subunits; this complex drives branch migration. In the full resolvosome a probable DNA-RuvA(4)-RuvB(12)-RuvC(2) complex forms which resolves the HJ.

It is found in the cytoplasm. The catalysed reaction is ATP + H2O = ADP + phosphate + H(+). In terms of biological role, the RuvA-RuvB-RuvC complex processes Holliday junction (HJ) DNA during genetic recombination and DNA repair, while the RuvA-RuvB complex plays an important role in the rescue of blocked DNA replication forks via replication fork reversal (RFR). RuvA specifically binds to HJ cruciform DNA, conferring on it an open structure. The RuvB hexamer acts as an ATP-dependent pump, pulling dsDNA into and through the RuvAB complex. RuvB forms 2 homohexamers on either side of HJ DNA bound by 1 or 2 RuvA tetramers; 4 subunits per hexamer contact DNA at a time. Coordinated motions by a converter formed by DNA-disengaged RuvB subunits stimulates ATP hydrolysis and nucleotide exchange. Immobilization of the converter enables RuvB to convert the ATP-contained energy into a lever motion, pulling 2 nucleotides of DNA out of the RuvA tetramer per ATP hydrolyzed, thus driving DNA branch migration. The RuvB motors rotate together with the DNA substrate, which together with the progressing nucleotide cycle form the mechanistic basis for DNA recombination by continuous HJ branch migration. Branch migration allows RuvC to scan DNA until it finds its consensus sequence, where it cleaves and resolves cruciform DNA. This Lactiplantibacillus plantarum (strain ATCC BAA-793 / NCIMB 8826 / WCFS1) (Lactobacillus plantarum) protein is Holliday junction branch migration complex subunit RuvB.